A 1102-amino-acid polypeptide reads, in one-letter code: Carbamoyl phosphate synthase large chain (1102 aa).

The segment at M1 to E408 is carboxyphosphate synthetic domain. The ATP site is built by R129, R175, G181, G182, E214, I216, E221, G247, V248, H249, Q291, and E305. One can recognise an ATP-grasp 1 domain in the interval A138–V334. Residues Q291, E305, and N307 each coordinate Mg(2+). Mn(2+)-binding residues include Q291, E305, and N307. An oligomerization domain region spans residues K409–S551. The segment at E552 to Y954 is carbamoyl phosphate synthetic domain. One can recognise an ATP-grasp 2 domain in the interval G682–L873. ATP contacts are provided by R718, R757, L759, E764, G789, I790, H791, S792, Q832, and E844. Residues Q832, E844, and N846 each contribute to the Mg(2+) site. Mn(2+) is bound by residues Q832, E844, and N846. One can recognise an MGS-like domain in the interval G955 to A1100. Residues G955 to D1102 form an allosteric domain region.

This sequence belongs to the CarB family. In terms of assembly, composed of two chains; the small (or glutamine) chain promotes the hydrolysis of glutamine to ammonia, which is used by the large (or ammonia) chain to synthesize carbamoyl phosphate. Tetramer of heterodimers (alpha,beta)4. Requires Mg(2+) as cofactor. The cofactor is Mn(2+).

It catalyses the reaction hydrogencarbonate + L-glutamine + 2 ATP + H2O = carbamoyl phosphate + L-glutamate + 2 ADP + phosphate + 2 H(+). It carries out the reaction hydrogencarbonate + NH4(+) + 2 ATP = carbamoyl phosphate + 2 ADP + phosphate + 2 H(+). Its pathway is amino-acid biosynthesis; L-arginine biosynthesis; carbamoyl phosphate from bicarbonate: step 1/1. It participates in pyrimidine metabolism; UMP biosynthesis via de novo pathway; (S)-dihydroorotate from bicarbonate: step 1/3. In terms of biological role, large subunit of the glutamine-dependent carbamoyl phosphate synthetase (CPSase). CPSase catalyzes the formation of carbamoyl phosphate from the ammonia moiety of glutamine, carbonate, and phosphate donated by ATP, constituting the first step of 2 biosynthetic pathways, one leading to arginine and/or urea and the other to pyrimidine nucleotides. The large subunit (synthetase) binds the substrates ammonia (free or transferred from glutamine from the small subunit), hydrogencarbonate and ATP and carries out an ATP-coupled ligase reaction, activating hydrogencarbonate by forming carboxy phosphate which reacts with ammonia to form carbamoyl phosphate. This is Carbamoyl phosphate synthase large chain from Streptomyces avermitilis (strain ATCC 31267 / DSM 46492 / JCM 5070 / NBRC 14893 / NCIMB 12804 / NRRL 8165 / MA-4680).